The primary structure comprises 749 residues: Polyribonucleotide nucleotidyltransferase (749 aa).

Mg(2+) contacts are provided by D487 and D493. In terms of domain architecture, KH spans 554–613 (PSTTTIKIDKDKIRDIIGPGGKIIKEICETSGAKIDISDDGTVSVYASDRDKLKVALDKI). The S1 motif domain occupies 623–691 (GEIFNGTVVK…NKGKAKLTIK (69 aa)). The interval 691-749 (KNADKDKSSNNTKPKTNVNNTNKDNSEPEQRRDSSKKRAWNEDNNAETAEVITERKYFN) is disordered. Residues 699 to 713 (SNNTKPKTNVNNTNK) are compositionally biased toward low complexity. Over residues 714–723 (DNSEPEQRRD) the composition is skewed to basic and acidic residues.

This sequence belongs to the polyribonucleotide nucleotidyltransferase family. The cofactor is Mg(2+).

It localises to the cytoplasm. It carries out the reaction RNA(n+1) + phosphate = RNA(n) + a ribonucleoside 5'-diphosphate. Functionally, involved in mRNA degradation. Catalyzes the phosphorolysis of single-stranded polyribonucleotides processively in the 3'- to 5'-direction. The polypeptide is Polyribonucleotide nucleotidyltransferase (Rickettsia conorii (strain ATCC VR-613 / Malish 7)).